We begin with the raw amino-acid sequence, 325 residues long: Elongation factor P--(R)-beta-lysine ligase (325 aa).

Residue 76-78 (SPE) coordinates substrate. Residues 100–102 (RNE) and Asn-109 each bind ATP. Substrate is bound at residue Tyr-118. Position 244 to 245 (244 to 245 (EL)) interacts with ATP. Position 251 (Glu-251) interacts with substrate. Gly-300 provides a ligand contact to ATP.

This sequence belongs to the class-II aminoacyl-tRNA synthetase family. EpmA subfamily. As to quaternary structure, homodimer.

It catalyses the reaction D-beta-lysine + L-lysyl-[protein] + ATP = N(6)-((3R)-3,6-diaminohexanoyl)-L-lysyl-[protein] + AMP + diphosphate + H(+). Its function is as follows. With EpmB is involved in the beta-lysylation step of the post-translational modification of translation elongation factor P (EF-P). Catalyzes the ATP-dependent activation of (R)-beta-lysine produced by EpmB, forming a lysyl-adenylate, from which the beta-lysyl moiety is then transferred to the epsilon-amino group of a conserved specific lysine residue in EF-P. The sequence is that of Elongation factor P--(R)-beta-lysine ligase from Sodalis glossinidius (strain morsitans).